The primary structure comprises 338 residues: Phenylalanine--tRNA ligase alpha subunit (338 aa).

Residue Glu252 participates in Mg(2+) binding.

The protein belongs to the class-II aminoacyl-tRNA synthetase family. Phe-tRNA synthetase alpha subunit type 1 subfamily. Tetramer of two alpha and two beta subunits. The cofactor is Mg(2+).

Its subcellular location is the cytoplasm. The enzyme catalyses tRNA(Phe) + L-phenylalanine + ATP = L-phenylalanyl-tRNA(Phe) + AMP + diphosphate + H(+). This Pseudomonas syringae pv. tomato (strain ATCC BAA-871 / DC3000) protein is Phenylalanine--tRNA ligase alpha subunit.